Here is a 198-residue protein sequence, read N- to C-terminus: dCTP deaminase (198 aa).

Residues 110–115 (RSSLAR), aspartate 128, 136–138 (VLE), tyrosine 171, lysine 178, and glutamine 182 contribute to the dCTP site. The active-site Proton donor/acceptor is glutamate 138. The interval 168 to 198 (ARPYNKREDAKYRDQKGAVASRISQDEKVNK) is disordered. Basic and acidic residues predominate over residues 172–183 (NKREDAKYRDQK).

This sequence belongs to the dCTP deaminase family. As to quaternary structure, homotrimer.

It catalyses the reaction dCTP + H2O + H(+) = dUTP + NH4(+). The protein operates within pyrimidine metabolism; dUMP biosynthesis; dUMP from dCTP (dUTP route): step 1/2. Catalyzes the deamination of dCTP to dUTP. This Colwellia psychrerythraea (strain 34H / ATCC BAA-681) (Vibrio psychroerythus) protein is dCTP deaminase.